The primary structure comprises 78 residues: Large ribosomal subunit protein bL28 (78 aa).

Positions 1 to 25 are disordered; it reads MSRVCQVTGKRPTVGNNRSHAKNAT.

Belongs to the bacterial ribosomal protein bL28 family.

The protein is Large ribosomal subunit protein bL28 of Tolumonas auensis (strain DSM 9187 / NBRC 110442 / TA 4).